Here is a 393-residue protein sequence, read N- to C-terminus: N-acyl-phosphatidylethanolamine-hydrolyzing phospholipase D (393 aa).

At methionine 1 the chain carries N-acetylmethionine. The segment covering 1-16 (MDENESNQSLMTSSQY) has biased composition (polar residues). The interval 1–40 (MDENESNQSLMTSSQYPKEAVRKRQNSARNSGGSDSSRFS) is disordered. The Zn(2+) site is built by histidine 185 and histidine 187. Tyrosine 188 serves as a coordination point for an N-acyl-1,2-diacyl-sn-glycero-3-phosphoethanolamine. Zn(2+) contacts are provided by aspartate 189, histidine 190, and histidine 253. Positions 256 and 260 each coordinate deoxycholate. Position 284 (aspartate 284) interacts with Zn(2+). Histidine 321 contributes to the an N-acyl-1,2-diacyl-sn-glycero-3-phosphoethanolamine binding site. Histidine 343 is a binding site for Zn(2+). Alanine 348 lines the deoxycholate pocket.

It belongs to the NAPE-PLD family. Homodimer. Bile acids promote the assembly of inactive monomers into an active dimer and enable catalysis. Zn(2+) serves as cofactor. Widely expressed. Highest expression in brain, kidney and testis (at protein level). Expressed in adipose tissue (at protein level).

It localises to the golgi apparatus membrane. The protein localises to the early endosome membrane. Its subcellular location is the nucleus envelope. It is found in the nucleus. The protein resides in the nucleoplasm. It carries out the reaction an N-acyl-1,2-diacyl-sn-glycero-3-phosphoethanolamine + H2O = an N-acylethanolamine + a 1,2-diacyl-sn-glycero-3-phosphate + H(+). It catalyses the reaction N-butanoyl-1-hexadecanoyl-2-(9Z,12Z-octadecadienoyl)-sn-glycero-3-phosphoethanolamine + H2O = N-butanoyl ethanolamine + 1-hexadecanoyl-2-(9Z,12Z-octadecadienoyl)-sn-glycero-3-phosphate + H(+). The catalysed reaction is N-hexanoyl-1-hexadecanoyl-2-(9Z,12Z-octadecadienoyl)-sn-glycero-3-phosphoethanolamine + H2O = N-hexanoyl ethanolamine + 1-hexadecanoyl-2-(9Z,12Z-octadecadienoyl)-sn-glycero-3-phosphate + H(+). The enzyme catalyses N-octanoyl-1-hexadecanoyl-2-(9Z,12Z-octadecadienoyl)-sn-glycero-3-phosphoethanolamine + H2O = N-octanoyl ethanolamine + 1-hexadecanoyl-2-(9Z,12Z-octadecadienoyl)-sn-glycero-3-phosphate + H(+). It carries out the reaction N-decanoyl-1-hexadecanoyl-2-(9Z,12Z-octadecadienoyl)-sn-glycero-3-phosphoethanolamine + H2O = N-decanoyl ethanolamine + 1-hexadecanoyl-2-(9Z,12Z-octadecadienoyl)-sn-glycero-3-phosphate + H(+). It catalyses the reaction N-dodecanoyl-1,2-di-(9Z-octadecenoyl)-sn-glycero-3-phosphoethanolamine + H2O = N-dodecanoylethanolamine + 1,2-di-(9Z-octadecenoyl)-sn-glycero-3-phosphate + H(+). The catalysed reaction is N-tetradecanoyl-1,2-di-(9Z-octadecenoyl)-sn-glycero-3-phosphoethanolamine + H2O = N-tetradecanoylethanolamine + 1,2-di-(9Z-octadecenoyl)-sn-glycero-3-phosphate + H(+). The enzyme catalyses N-hexadecanoyl-1,2-di-(9Z-octadecenoyl)-sn-glycero-3-phosphoethanolamine + H2O = N-hexadecanoylethanolamine + 1,2-di-(9Z-octadecenoyl)-sn-glycero-3-phosphate + H(+). It carries out the reaction N,1-dihexadecanoyl-2-(9Z,12Z-octadecadienoyl)-sn-glycero-3-phosphoethanolamine + H2O = 1-hexadecanoyl-2-(9Z,12Z-octadecadienoyl)-sn-glycero-3-phosphate + N-hexadecanoylethanolamine + H(+). It catalyses the reaction N-octadecanoyl-1,2-di-(9Z-octadecenoyl)-sn-glycero-3-phosphoethanolamine + H2O = N-octadecanoyl ethanolamine + 1,2-di-(9Z-octadecenoyl)-sn-glycero-3-phosphate + H(+). The catalysed reaction is N,1,2-tri-(9Z-octadecenoyl)-sn-glycero-3-phosphoethanolamine + H2O = N-(9Z-octadecenoyl) ethanolamine + 1,2-di-(9Z-octadecenoyl)-sn-glycero-3-phosphate + H(+). The enzyme catalyses N-(5Z,8Z,11Z,14Z-eicosatetraenoyl)-1,2-diacyl-sn-glycero-3-phosphoethanolamine + H2O = N-(5Z,8Z,11Z,14Z-eicosatetraenoyl)-ethanolamine + a 1,2-diacyl-sn-glycero-3-phosphate + H(+). It carries out the reaction N-(5Z,8Z,11Z,14Z-eicosatetraenoyl)-1,2-di-(9Z-octadecenoyl)-sn-glycero-3-phosphoethanolamine + H2O = N-(5Z,8Z,11Z,14Z-eicosatetraenoyl)-ethanolamine + 1,2-di-(9Z-octadecenoyl)-sn-glycero-3-phosphate + H(+). It catalyses the reaction 1-O-(1Z-octadecenoyl)-2-(9Z-octadecenoyl)-sn-glycero-3-phospho-N-hexadecanoyl-ethanolamine + H2O = 1-O-(1Z-octadecenoyl)-2-(9Z-octadecenoyl)-sn-glycero-3-phosphate + N-hexadecanoylethanolamine + H(+). The catalysed reaction is N,1-diacyl-sn-glycero-3-phosphoethanolamine + H2O = an N-acylethanolamine + a 1-acyl-sn-glycero-3-phosphate + H(+). The enzyme catalyses N,1-dihexadecanoyl-sn-glycero-3-phosphoethanolamine + H2O = N-hexadecanoylethanolamine + 1-hexadecanoyl-sn-glycero-3-phosphate + H(+). It carries out the reaction N-(5Z,8Z,11Z,14Z-eicosatetraenoyl)-1-(9Z-octadecenoyl)-sn-glycero-3-phosphoethanolamine + H2O = N-(5Z,8Z,11Z,14Z-eicosatetraenoyl)-ethanolamine + 1-(9Z-octadecenoyl)-sn-glycero-3-phosphate + H(+). Activated by divalent cations. Activated by bile acids. D-type phospholipase that hydrolyzes N-acyl-phosphatidylethanolamines (NAPEs) to produce bioactive N-acylethanolamines/fatty acid ethanolamides (NAEs/FAEs) and phosphatidic acid. Cleaves the terminal phosphodiester bond of diacyl- and alkenylacyl-NAPEs, primarily playing a role in the generation of long-chain saturated and monounsaturated NAEs in the brain. May control NAPE homeostasis in dopaminergic neuron membranes and regulate neuron survival, partly through RAC1 activation. As a regulator of lipid metabolism in the adipose tissue, mediates the crosstalk between adipocytes, gut microbiota and immune cells to control body temperature and weight. In particular, regulates energy homeostasis by promoting cold-induced brown or beige adipocyte differentiation program to generate heat from fatty acids and glucose. Has limited D-type phospholipase activity toward N-acyl lyso-NAPEs. The sequence is that of N-acyl-phosphatidylethanolamine-hydrolyzing phospholipase D (NAPEPLD) from Pongo abelii (Sumatran orangutan).